The following is a 123-amino-acid chain: Large ribosomal subunit protein uL18 (123 aa).

The protein belongs to the universal ribosomal protein uL18 family. In terms of assembly, part of the 50S ribosomal subunit; part of the 5S rRNA/L5/L18/L25 subcomplex. Contacts the 5S and 23S rRNAs.

Its function is as follows. This is one of the proteins that bind and probably mediate the attachment of the 5S RNA into the large ribosomal subunit, where it forms part of the central protuberance. This chain is Large ribosomal subunit protein uL18, found in Protochlamydia amoebophila (strain UWE25).